Here is a 416-residue protein sequence, read N- to C-terminus: Phosphatidylserine decarboxylase proenzyme, mitochondrial (416 aa).

Over 1 to 67 (MPGKSTRPLP…GRLHFPQLAL (67 aa)) the chain is Mitochondrial matrix. The helical transmembrane segment at 68 to 86 (RRRLGQLSCMSKPALKLRS) threads the bilayer. Residues 87–416 (WPLTVLYYLL…IRFGEALGSL (330 aa)) are Mitochondrial intermembrane-facing. Active-site charge relay system; for autoendoproteolytic cleavage activity residues include Asp-198, His-274, and Ser-385. The Schiff-base intermediate with substrate; via pyruvic acid; for decarboxylase activity role is filled by Ser-385. Ser-385 carries the pyruvic acid (Ser); by autocatalysis modification.

It belongs to the phosphatidylserine decarboxylase family. PSD-B subfamily. Eukaryotic type I sub-subfamily. In terms of assembly, heterodimer of a large membrane-associated beta subunit and a small pyruvoyl-containing alpha subunit. Requires pyruvate as cofactor. Is synthesized initially as an inactive proenzyme. Formation of the active enzyme involves a self-maturation process in which the active site pyruvoyl group is generated from an internal serine residue via an autocatalytic post-translational modification. Two non-identical subunits are generated from the proenzyme in this reaction, and the pyruvate is formed at the N-terminus of the alpha chain, which is derived from the carboxyl end of the proenzyme. The autoendoproteolytic cleavage occurs by a canonical serine protease mechanism, in which the side chain hydroxyl group of the serine supplies its oxygen atom to form the C-terminus of the beta chain, while the remainder of the serine residue undergoes an oxidative deamination to produce ammonia and the pyruvoyl prosthetic group on the alpha chain. During this reaction, the Ser that is part of the protease active site of the proenzyme becomes the pyruvoyl prosthetic group, which constitutes an essential element of the active site of the mature decarboxylase.

Its subcellular location is the mitochondrion inner membrane. The protein localises to the cytoplasm. It is found in the lipid droplet. The enzyme catalyses a 1,2-diacyl-sn-glycero-3-phospho-L-serine + H(+) = a 1,2-diacyl-sn-glycero-3-phosphoethanolamine + CO2. The protein operates within phospholipid metabolism; phosphatidylethanolamine biosynthesis. Functionally, catalyzes the formation of phosphatidylethanolamine (PtdEtn) from phosphatidylserine (PtdSer). Plays a central role in phospholipid metabolism and in the interorganelle trafficking of phosphatidylserine. May be involved in lipid droplet biogenesis at the endoplasmic reticulum membrane. This Bos taurus (Bovine) protein is Phosphatidylserine decarboxylase proenzyme, mitochondrial.